Reading from the N-terminus, the 151-residue chain is Histone H2A.2.2 (151 aa).

The residue at position 1 (methionine 1) is an N-acetylmethionine. Residues 129–151 (EKAEKAGTKAKSPKKATKSPKKA) are disordered. Over residues 139 to 151 (KSPKKATKSPKKA) the composition is skewed to basic residues. 2 short sequence motifs (SPKK motif) span residues 140-143 (SPKK) and 147-150 (SPKK).

It belongs to the histone H2A family. In terms of assembly, the nucleosome is a histone octamer containing two molecules each of H2A, H2B, H3 and H4 assembled in one H3-H4 heterotetramer and two H2A-H2B heterodimers. The octamer wraps approximately 147 bp of DNA. Post-translationally, phosphorylated within its C-terminal part, probably at the SPKK motifs.

Its subcellular location is the nucleus. It localises to the chromosome. In terms of biological role, core component of nucleosome. Nucleosomes wrap and compact DNA into chromatin, limiting DNA accessibility to the cellular machineries which require DNA as a template. Histones thereby play a central role in transcription regulation, DNA repair, DNA replication and chromosomal stability. DNA accessibility is regulated via a complex set of post-translational modifications of histones, also called histone code, and nucleosome remodeling. In Triticum aestivum (Wheat), this protein is Histone H2A.2.2.